The following is a 745-amino-acid chain: Phosphate transporter PHO1 homolog 4 (745 aa).

The SPX domain maps to 1 to 290; it reads MRFGKEFVSQ…KRNAAKLYME (290 aa). The Cytoplasmic portion of the chain corresponds to 1–342; sequence MRFGKEFVSQ…KINKERHLIT (342 aa). A helical transmembrane segment spans residues 343–363; the sequence is FSTGFFFGCGISLIVALGLII. At 364–383 the chain is on the extracellular side; sequence HARNIMGTPGQRTYMETMFP. The helical transmembrane segment at 384 to 404 threads the bilayer; sequence LYRFFGFVVLHMDVYAANIYF. The Cytoplasmic portion of the chain corresponds to 405-427; that stretch reads WRRYRVNYSFIFGFKQGTELGYR. The helical transmembrane segment at 428-448 threads the bilayer; sequence HVLLLSFGLGTLSLCAVLLNL. Topologically, residues 449 to 464 are extracellular; that stretch reads DMEMDAQTKDYRLVTE. Residues 465–485 form a helical membrane-spanning segment; sequence LIPLFLLVLVIIIVLCPFNIL. Over 486–615 the chain is Cytoplasmic; sequence YRSSRFFFLS…YTLNRGSNWN (130 aa). An EXS domain is found at 550–744; it reads TSNIGFRTFY…NYEEDGDHHN (195 aa). A helical transmembrane segment spans residues 616–636; the sequence is ITAWVFSGVATFYGTYWDIVL. The Extracellular segment spans residues 637–660; sequence DWGLLQRGCKNSFLRDKLLVPHKT. Residues 661-681 form a helical membrane-spanning segment; sequence VYYAAMVLNVLLRLVWLQTVL. Topologically, residues 682 to 745 are cytoplasmic; sequence DLKFSFLHRE…YEEDGDHHNN (64 aa).

This sequence belongs to the SYG1 (TC 2.A.94) family. Expressed in root epidermis and cortex, leaf hydathodes, pollen grains and stigma apex.

The protein localises to the cell membrane. May transport inorganic phosphate (Pi). The protein is Phosphate transporter PHO1 homolog 4 (PHO1-H4) of Arabidopsis thaliana (Mouse-ear cress).